A 176-amino-acid polypeptide reads, in one-letter code: Variant surface antigen A (176 aa).

Positions 1 to 29 (MKKSIFSKKLLVSFGSLVALAAIPLIAIS) are cleaved as a signal peptide. Cys-30 is lipidated: N-palmitoyl cysteine. The S-diacylglycerol cysteine moiety is linked to residue Cys-30. A disordered region spans residues 33–176 (TDNNSSQSQQ…TKTENTQHTS (144 aa)). Residues 35-121 (NNSSQSQQPG…GSNSESGMNS (87 aa)) show a composition bias toward low complexity. Repeat unit 1 spans residues 123–135 (KTENTQQSEAPGT). The tract at residues 123–176 (KTENTQQSEAPGTNTGNKTTSESNSESGMNSEKTENTQQSEAPGTKTENTQHTS) is 2.5 X 13 AA repeats. The segment covering 126 to 142 (NTQQSEAPGTNTGNKTT) has biased composition (polar residues). The span at 143–153 (SESNSESGMNS) shows a compositional bias: low complexity. Copy 2 of the repeat occupies 155-167 (KTENTQQSEAPGT). Residues 158 to 176 (NTQQSEAPGTKTENTQHTS) show a composition bias toward polar residues. The stretch at 168–176 (KTENTQHTS) is one 3; truncated repeat.

It is found in the cell membrane. Responsible for the antigenic diversity for host adaptation. This Mesomycoplasma hyorhinis (Mycoplasma hyorhinis) protein is Variant surface antigen A (vlpA).